An 86-amino-acid chain; its full sequence is Electron transfer flavoprotein regulatory factor 1 (86 aa).

The protein belongs to the complex I LYR family. Homotetramer. Interacts with NDUFAB1. Interacts with ETFA. Interacts with ETFB.

Its subcellular location is the mitochondrion. In terms of biological role, acts as a regulator of the electron transfer flavoprotein by promoting the removal of flavin from the ETF holoenzyme (composed of ETFA and ETFB). In Mus musculus (Mouse), this protein is Electron transfer flavoprotein regulatory factor 1.